The chain runs to 92 residues: Large ribosomal subunit protein eL43 (92 aa).

The C4-type zinc finger occupies 39 to 60; sequence CDFCGKYGMKRKAVGIWSCKGC.

The protein belongs to the eukaryotic ribosomal protein eL43 family.

This chain is Large ribosomal subunit protein eL43 (RPL37a), found in Ostreococcus lucimarinus (strain CCE9901).